The sequence spans 391 residues: S-adenosylmethionine synthase (391 aa).

His14 is an ATP binding site. Asp16 is a binding site for Mg(2+). Glu42 provides a ligand contact to K(+). Glu55 and Gln98 together coordinate L-methionine. The tract at residues 98–108 is flexible loop; that stretch reads QSVDIAIGVDE. Residues 172–174, 238–239, Asp247, 253–254, Ala270, and Lys274 contribute to the ATP site; these read DGK, RF, and RK. L-methionine is bound at residue Asp247. Lys278 is an L-methionine binding site.

Belongs to the AdoMet synthase family. Homotetramer; dimer of dimers. Mg(2+) serves as cofactor. The cofactor is K(+).

Its subcellular location is the cytoplasm. It catalyses the reaction L-methionine + ATP + H2O = S-adenosyl-L-methionine + phosphate + diphosphate. Its pathway is amino-acid biosynthesis; S-adenosyl-L-methionine biosynthesis; S-adenosyl-L-methionine from L-methionine: step 1/1. Functionally, catalyzes the formation of S-adenosylmethionine (AdoMet) from methionine and ATP. The overall synthetic reaction is composed of two sequential steps, AdoMet formation and the subsequent tripolyphosphate hydrolysis which occurs prior to release of AdoMet from the enzyme. This is S-adenosylmethionine synthase from Clostridium botulinum (strain Okra / Type B1).